Reading from the N-terminus, the 312-residue chain is Protein ABIL2 (312 aa).

Positions 173 to 287 (TIRETPPPPV…TEQQQPSKSK (115 aa)) are disordered. The span at 183-199 (RKSTSQSSSPRQPPQRS) shows a compositional bias: low complexity. The span at 230–251 (SVATRKSASISRPTTPSKSRSI) shows a compositional bias: polar residues. The span at 269 to 279 (AFEKDNQKETE) shows a compositional bias: basic and acidic residues.

This sequence belongs to the ABI family. Binds SCAR.

The protein localises to the cytoplasm. It is found in the cytoskeleton. Its function is as follows. Involved in regulation of actin and microtubule organization. Part of a WAVE complex that activates the Arp2/3 complex. The chain is Protein ABIL2 (ABIL2) from Arabidopsis thaliana (Mouse-ear cress).